A 357-amino-acid chain; its full sequence is 4-hydroxy-3-methylbut-2-en-1-yl diphosphate synthase (flavodoxin) (357 aa).

Positions 264, 267, 299, and 306 each coordinate [4Fe-4S] cluster.

The protein belongs to the IspG family. [4Fe-4S] cluster is required as a cofactor.

It carries out the reaction (2E)-4-hydroxy-3-methylbut-2-enyl diphosphate + oxidized [flavodoxin] + H2O + 2 H(+) = 2-C-methyl-D-erythritol 2,4-cyclic diphosphate + reduced [flavodoxin]. It participates in isoprenoid biosynthesis; isopentenyl diphosphate biosynthesis via DXP pathway; isopentenyl diphosphate from 1-deoxy-D-xylulose 5-phosphate: step 5/6. Functionally, converts 2C-methyl-D-erythritol 2,4-cyclodiphosphate (ME-2,4cPP) into 1-hydroxy-2-methyl-2-(E)-butenyl 4-diphosphate. In Campylobacter jejuni (strain RM1221), this protein is 4-hydroxy-3-methylbut-2-en-1-yl diphosphate synthase (flavodoxin).